The chain runs to 197 residues: HTH-type transcriptional regulator BetI (197 aa).

The 61-residue stretch at 8–68 folds into the HTH tetR-type domain; the sequence is PIRRQQLIEA…ATMRYLMNAL (61 aa). The H-T-H motif DNA-binding region spans 31-50; it reads SIALIARLAGVSNGIISHYF.

The protein operates within amine and polyamine biosynthesis; betaine biosynthesis via choline pathway [regulation]. Functionally, repressor involved in the biosynthesis of the osmoprotectant glycine betaine. It represses transcription of the choline transporter BetT and the genes of BetAB involved in the synthesis of glycine betaine. The chain is HTH-type transcriptional regulator BetI from Pseudomonas fluorescens (strain SBW25).